A 292-amino-acid chain; its full sequence is Protein/nucleic acid deglycase HchA (292 aa).

A compositionally biased stretch (polar residues) spans 1–12; it reads MSQDVNELSKQP. The disordered stretch occupies residues 1 to 23; that stretch reads MSQDVNELSKQPTPDKAEDNAFF. Cysteine 190 serves as the catalytic Nucleophile.

This sequence belongs to the peptidase C56 family. HchA subfamily.

The protein localises to the cytoplasm. It catalyses the reaction N(omega)-(1-hydroxy-2-oxopropyl)-L-arginyl-[protein] + H2O = lactate + L-arginyl-[protein] + H(+). It carries out the reaction N(6)-(1-hydroxy-2-oxopropyl)-L-lysyl-[protein] + H2O = lactate + L-lysyl-[protein] + H(+). The enzyme catalyses S-(1-hydroxy-2-oxopropyl)-L-cysteinyl-[protein] + H2O = lactate + L-cysteinyl-[protein] + H(+). The catalysed reaction is N(omega)-(1-hydroxy-2-oxoethyl)-L-arginyl-[protein] + H2O = L-arginyl-[protein] + glycolate + H(+). It catalyses the reaction N(6)-(1-hydroxy-2-oxoethyl)-L-lysyl-[protein] + H2O = glycolate + L-lysyl-[protein] + H(+). It carries out the reaction S-(1-hydroxy-2-oxoethyl)-L-cysteinyl-[protein] + H2O = glycolate + L-cysteinyl-[protein] + H(+). The enzyme catalyses N(2)-(1-hydroxy-2-oxopropyl)-dGTP + H2O = lactate + dGTP + H(+). The catalysed reaction is N(2)-(1-hydroxy-2-oxopropyl)-GTP + H2O = lactate + GTP + H(+). It catalyses the reaction N(2)-(1-hydroxy-2-oxopropyl)-GDP + H2O = lactate + GDP + H(+). It carries out the reaction N(2)-(1-hydroxy-2-oxopropyl)-GMP + H2O = lactate + GMP + H(+). The enzyme catalyses N(2)-(1-hydroxy-2-oxoethyl)-dGTP + H2O = dGTP + glycolate + H(+). The catalysed reaction is N(2)-(1-hydroxy-2-oxoethyl)-GTP + H2O = glycolate + GTP + H(+). It catalyses the reaction N(2)-(1-hydroxy-2-oxoethyl)-GDP + H2O = glycolate + GDP + H(+). It carries out the reaction N(2)-(1-hydroxy-2-oxoethyl)-GMP + H2O = glycolate + GMP + H(+). The enzyme catalyses an N(2)-(1-hydroxy-2-oxopropyl)-guanosine in RNA + H2O = a guanosine in RNA + lactate + H(+). The catalysed reaction is an N(2)-(1-hydroxy-2-oxopropyl)-2'-deoxyguanosine in DNA + H2O = a 2'-deoxyguanosine in DNA + lactate + H(+). It catalyses the reaction an N(2)-(1-hydroxy-2-oxoethyl)-guanosine in RNA + H2O = a guanosine in RNA + glycolate + H(+). It carries out the reaction an N(2)-(1-hydroxy-2-oxoethyl)-2'-deoxyguanosine in DNA + H2O = a 2'-deoxyguanosine in DNA + glycolate + H(+). Functionally, protein and nucleotide deglycase that catalyzes the deglycation of the Maillard adducts formed between amino groups of proteins or nucleotides and reactive carbonyl groups of glyoxals. Thus, functions as a protein deglycase that repairs methylglyoxal- and glyoxal-glycated proteins, and releases repaired proteins and lactate or glycolate, respectively. Deglycates cysteine, arginine and lysine residues in proteins, and thus reactivates these proteins by reversing glycation by glyoxals. Acts on early glycation intermediates (hemithioacetals and aminocarbinols), preventing the formation of Schiff bases and advanced glycation endproducts (AGE). Also functions as a nucleotide deglycase able to repair glycated guanine in the free nucleotide pool (GTP, GDP, GMP, dGTP) and in DNA and RNA. Is thus involved in a major nucleotide repair system named guanine glycation repair (GG repair), dedicated to reversing methylglyoxal and glyoxal damage via nucleotide sanitization and direct nucleic acid repair. Plays an important role in protecting cells from carbonyl stress. The chain is Protein/nucleic acid deglycase HchA from Staphylococcus aureus (strain bovine RF122 / ET3-1).